The primary structure comprises 109 residues: Hainantoxin-XVIII.2 (109 aa).

A signal peptide spans M1–A18. Residues F19–A46 constitute a propeptide that is removed on maturation. 4 disulfides stabilise this stretch: C47–C62, C55–C68, C59–C108, and C61–C81.

It belongs to the neurotoxin 25 family. F7 subfamily. Expressed by the venom gland.

It localises to the secreted. Its function is as follows. Putative ion channel inhibitor. This chain is Hainantoxin-XVIII.2, found in Cyriopagopus hainanus (Chinese bird spider).